Consider the following 429-residue polypeptide: Histidine--tRNA ligase (429 aa).

This sequence belongs to the class-II aminoacyl-tRNA synthetase family. As to quaternary structure, homodimer.

The protein resides in the cytoplasm. It carries out the reaction tRNA(His) + L-histidine + ATP = L-histidyl-tRNA(His) + AMP + diphosphate + H(+). The protein is Histidine--tRNA ligase of Prochlorococcus marinus (strain MIT 9515).